The primary structure comprises 281 residues: Nucleotide-binding protein TRQ2_1124 (281 aa).

Position 9–16 (9–16) interacts with ATP; sequence GLSGAGKT. 58-61 provides a ligand contact to GTP; the sequence is DVRS.

It belongs to the RapZ-like family.

Its function is as follows. Displays ATPase and GTPase activities. In Thermotoga sp. (strain RQ2), this protein is Nucleotide-binding protein TRQ2_1124.